Here is a 156-residue protein sequence, read N- to C-terminus: ATP synthase subunit b (156 aa).

A helical transmembrane segment spans residues 7 to 27; the sequence is LFAQIIVFFGLVWFTMKFVWP.

The protein belongs to the ATPase B chain family. As to quaternary structure, F-type ATPases have 2 components, F(1) - the catalytic core - and F(0) - the membrane proton channel. F(1) has five subunits: alpha(3), beta(3), gamma(1), delta(1), epsilon(1). F(0) has three main subunits: a(1), b(2) and c(10-14). The alpha and beta chains form an alternating ring which encloses part of the gamma chain. F(1) is attached to F(0) by a central stalk formed by the gamma and epsilon chains, while a peripheral stalk is formed by the delta and b chains.

Its subcellular location is the cell inner membrane. Its function is as follows. F(1)F(0) ATP synthase produces ATP from ADP in the presence of a proton or sodium gradient. F-type ATPases consist of two structural domains, F(1) containing the extramembraneous catalytic core and F(0) containing the membrane proton channel, linked together by a central stalk and a peripheral stalk. During catalysis, ATP synthesis in the catalytic domain of F(1) is coupled via a rotary mechanism of the central stalk subunits to proton translocation. In terms of biological role, component of the F(0) channel, it forms part of the peripheral stalk, linking F(1) to F(0). This Neisseria meningitidis serogroup C (strain 053442) protein is ATP synthase subunit b.